A 615-amino-acid chain; its full sequence is Erythritol-mannosyl-transferase 1 (615 aa).

Positions 366-387 (RTPNNTGASTPTAPISSPDFEE) are disordered. Over residues 367 to 380 (TPNNTGASTPTAPI) the composition is skewed to polar residues.

It belongs to the UDP-glycosyltransferase family.

It is found in the vacuole membrane. The protein operates within secondary metabolite biosynthesis. Functionally, erythritol-mannosyl-transferase; part of the gene cluster that mediates the biosynthesis of mannosylerythritol lipids (MELs), surface-active substances that enhance the availability of water-insoluble substrates. Mannosylerythritol lipid production is responsible for hemolytic activity of Ustilago maydis. Depending on the number of acetyl groups, mannosylerythritol lipids can be differentiated into MEL A (fully acetylated), MEL B and MEL C (monoacetylated at R-6 and R-4, respectively), and the fully deacetylated MEL D. The first step in the pathway is the generation of mannosylerythritol by the glycosyltransferase EMT1 which catalyzes the transfer of GDP-mannose to the C-4 atom of meso-erythritol. This reaction has to be stereospecific, since only mannosyl-D-erythritol is generated. The produced disaccharide is subsequently acylated with fatty acids of various lengths derived from the peroxisomal beta-oxidation by the peroxisomal acyltransferases MAC1 and MAC2 at positions C-2 and C-3, repectively. The existence of MEL derivatives which carry an acetyl group at C-2 implies that at least MAC1 also accepts acetyl-CoA as a donor. The final step of MEL biosynthesis is the acetylation of the fully acylated mannosylerythritol lipids catalyzed by the acetyl-CoA-dependent acetyltransferase MAT1. MAT1 displays a relaxed regioselectivity and is able to transfer acetylgroups to both positions C-4 and C-6 of the mannosyl moiety. The polypeptide is Erythritol-mannosyl-transferase 1 (Mycosarcoma maydis (Corn smut fungus)).